We begin with the raw amino-acid sequence, 210 residues long: Thymidylate kinase (210 aa).

11-18 (GVDGAGKT) contacts ATP.

This sequence belongs to the thymidylate kinase family.

It catalyses the reaction dTMP + ATP = dTDP + ADP. Its function is as follows. Phosphorylation of dTMP to form dTDP in both de novo and salvage pathways of dTTP synthesis. This chain is Thymidylate kinase (tmk), found in Mycoplasma genitalium (strain ATCC 33530 / DSM 19775 / NCTC 10195 / G37) (Mycoplasmoides genitalium).